We begin with the raw amino-acid sequence, 284 residues long: Bifunctional protein FolD (284 aa).

Residues 165-167, Ser-190, and Ile-231 each bind NADP(+); that span reads GRS.

Belongs to the tetrahydrofolate dehydrogenase/cyclohydrolase family. In terms of assembly, homodimer.

The catalysed reaction is (6R)-5,10-methylene-5,6,7,8-tetrahydrofolate + NADP(+) = (6R)-5,10-methenyltetrahydrofolate + NADPH. The enzyme catalyses (6R)-5,10-methenyltetrahydrofolate + H2O = (6R)-10-formyltetrahydrofolate + H(+). It functions in the pathway one-carbon metabolism; tetrahydrofolate interconversion. Functionally, catalyzes the oxidation of 5,10-methylenetetrahydrofolate to 5,10-methenyltetrahydrofolate and then the hydrolysis of 5,10-methenyltetrahydrofolate to 10-formyltetrahydrofolate. In Lysinibacillus sphaericus (strain C3-41), this protein is Bifunctional protein FolD.